We begin with the raw amino-acid sequence, 165 residues long: Mitochondrial fission process protein 1 (165 aa).

Helical transmembrane passes span 35–55, 76–96, and 130–150; these read ALVPVGAVWASYGVATTYVTA, VCVCVAVVDTFVWQALASVAV, and IGLSTIPFIITPIDRSVDLLL.

The protein belongs to the MTFP1 family.

It localises to the mitochondrion inner membrane. Its function is as follows. Involved in the mitochondrial division probably by regulating membrane fission. Loss-of-function leads to apoptosis. The polypeptide is Mitochondrial fission process protein 1 (mtfp1) (Danio rerio (Zebrafish)).